Here is a 299-residue protein sequence, read N- to C-terminus: Peroxisomal biogenesis factor 19 (299 aa).

N-acetylalanine is present on Ala-2. The tract at residues 2-56 (AAAEGGCGAGVEADRELEELLESALDDFDKAKPSPAPSPTISAPDASGPQKRSPG) is docking to the peroxisome membrane and binding to PEX3. Residues 2 to 91 (AAAEGGCGAG…QATAEFEKAM (90 aa)) form a necessary for PEX19 function on peroxisome biogenesis region. The segment at 25–63 (ALDDFDKAKPSPAPSPTISAPDASGPQKRSPGDTAKDAL) is disordered. Residues Ser-35, Ser-39, Ser-54, and Ser-66 each carry the phosphoserine modification. The residue at position 236 (Thr-236) is a Phosphothreonine. Cys-296 carries the cysteine methyl ester modification. Cys-296 carries the S-farnesyl cysteine lipid modification. The propeptide at 297–299 (LIM) is removed in mature form.

The protein belongs to the peroxin-19 family. Interacts with a broad range of peroxisomal membrane proteins, including PEX3, PEX10, PEX11A, PEX11B, PEX12, PEX13, PEX14 and PEX16, PXMP2/PMP22, PXMP4/PMP24, SLC25A17/PMP34, ABCD1/ALDP, ABCD2/ALDRP, and ABCD3/PMP70. Also interacts with the tumor suppressor CDKN2A/p19ARF.

It localises to the cytoplasm. The protein localises to the peroxisome membrane. Necessary for early peroxisomal biogenesis. Acts both as a cytosolic chaperone and as an import receptor for peroxisomal membrane proteins (PMPs). Binds and stabilizes newly synthesized PMPs in the cytoplasm by interacting with their hydrophobic membrane-spanning domains, and targets them to the peroxisome membrane by binding to the integral membrane protein PEX3. Excludes CDKN2A from the nucleus and prevents its interaction with MDM2, which results in active degradation of TP53. The polypeptide is Peroxisomal biogenesis factor 19 (Pex19) (Rattus norvegicus (Rat)).